The chain runs to 245 residues: Tetraspanin-6 (245 aa).

Topologically, residues 1–19 (MASPSRRLQTKPVITCFKS) are cytoplasmic. A helical membrane pass occupies residues 20 to 40 (VLLIYTFIFWITGVILLAVGI). Topologically, residues 41-59 (WGKVSLENYFSLLNEKATN) are extracellular. A helical membrane pass occupies residues 60–80 (VPFVLIATGTVIILLGTFGCF). Over 81–93 (ATCRASAWMLKLY) the chain is Cytoplasmic. Residues 94 to 114 (AMFLTLIFLVELVAAIVGFVF) traverse the membrane as a helical segment. Topologically, residues 115–208 (RHEIKNSFKN…IKVMTIIESE (94 aa)) are extracellular. Residue N134 is glycosylated (N-linked (GlcNAc...) asparagine). Residues 209–229 (MGVVAGISFGVACFQLIGIFL) traverse the membrane as a helical segment. The Cytoplasmic segment spans residues 230 to 245 (AYCLSRAITNNQYEIV).

The protein belongs to the tetraspanin (TM4SF) family.

The protein resides in the membrane. The sequence is that of Tetraspanin-6 (TSPAN6) from Pongo abelii (Sumatran orangutan).